The sequence spans 441 residues: MSRPVVAIVGRPNVGKSTLFNALAGERISIVKDTPGVTRDRIYADVSWLDYNFTMIDTGGIEPESGDVILSQMREQAQIAIDTADVIIFITDVKQGLVDSDSKVADMLRRSHKPVVLVVNKVDSFEKYMTDVYEFYNLGIGDPHPISAASMLGLGDMLDEVVKHFPDSSKQDDEDDRPRVAIVGKPNVGKSSLINKLAREDRVIVSDIAGTTRDAIDTAIKYDGKEYIFIDTAGLRRKNKIKEDIERYSIIRAVSAVERADVVIVVIDATEGVTEQDAKIAGIAHERGKGIIIAVNKWDAIEKDNNTVKQHTEKIRQILSFIPYAEILFISAKSGQRLNKIFELIDVVIENNSMRVATGVLNEIVTEAVAMQQPPTDKGKRLKIYYVTQVSVKPPTFVIFVNDKNLMHFSYTRYLENRIRDTFGFRGTALKFITRERKENE.

2 EngA-type G domains span residues 4-169 (PVVA…PDSS) and 178-353 (PRVA…ENNS). Residues 10 to 17 (GRPNVGKS), 57 to 61 (DTGGI), 120 to 123 (NKVD), 184 to 191 (GKPNVGKS), 231 to 235 (DTAGL), and 296 to 299 (NKWD) contribute to the GTP site. The KH-like domain maps to 354 to 438 (MRVATGVLNE…ALKFITRERK (85 aa)).

The protein belongs to the TRAFAC class TrmE-Era-EngA-EngB-Septin-like GTPase superfamily. EngA (Der) GTPase family. As to quaternary structure, associates with the 50S ribosomal subunit.

Functionally, GTPase that plays an essential role in the late steps of ribosome biogenesis. This Agathobacter rectalis (strain ATCC 33656 / DSM 3377 / JCM 17463 / KCTC 5835 / VPI 0990) (Eubacterium rectale) protein is GTPase Der.